A 338-amino-acid polypeptide reads, in one-letter code: Nicotinate-nucleotide--dimethylbenzimidazole phosphoribosyltransferase (338 aa).

Glutamate 305 acts as the Proton acceptor in catalysis.

Belongs to the CobT family.

The enzyme catalyses 5,6-dimethylbenzimidazole + nicotinate beta-D-ribonucleotide = alpha-ribazole 5'-phosphate + nicotinate + H(+). The protein operates within nucleoside biosynthesis; alpha-ribazole biosynthesis; alpha-ribazole from 5,6-dimethylbenzimidazole: step 1/2. Catalyzes the synthesis of alpha-ribazole-5'-phosphate from nicotinate mononucleotide (NAMN) and 5,6-dimethylbenzimidazole (DMB). The sequence is that of Nicotinate-nucleotide--dimethylbenzimidazole phosphoribosyltransferase from Sinorhizobium medicae (strain WSM419) (Ensifer medicae).